The chain runs to 521 residues: Cytochrome P450 monooxygenase ARMGADRAFT_1018420 (521 aa).

A helical membrane pass occupies residues 9-26; sequence VSPIWILTAIVVVAYTTV. Cys443 contacts heme. N-linked (GlcNAc...) asparagine glycosylation is present at Asn450.

The protein belongs to the cytochrome P450 family. It depends on heme as a cofactor.

It localises to the membrane. Its pathway is secondary metabolite biosynthesis. Cytochrome P450 monooxygenase, part of the gene cluster that mediates the biosynthesis of melleolides, a range of antifungal and phytotoxic polyketide derivatives composed of an orsellinic acid (OA) moiety esterified to various sesquiterpene alcohols. The first step in melleolides biosynthesis is performed by the delta(6)-protoilludene synthase PRO1 which catalyzes the cyclization of farnesyl diphosphate to protoilludene. The orsellinic acid synthase armB produces OA by condensing acetyl-CoA with 3 malonyl-CoA units in a three-round chain elongation reaction folowed by a C2-C7 ring closure. ArmB further catalyzes the trans-esterification of OA to the various sesquiterpene alcohols resulting from the hydroxylation of protoilludene. The melleolides cluster also includes 5 cytochrome P450 monooxygenases, 4 NAD(+)-dependent oxidoreductases, one flavin-dependent oxidoreductase, and one O-methyltransferase. The cytochrome P450 monooxygenases may be involved in protoilludene hydroxylation to elaborate melleolides with multiple alcohol groups, such as melleolide D, which carries alcohol functionalities at C-4, C-5, C-10, and C-13. The role of the NAD(+)-dependent enzymes remains unknown. Numerous melleolides, including arnamial, show 5'-O-methylation of the aromatic moiety which may be catalyzed by the methyltransferase encoded in the cluster. The flavin-dependent oxidoreductase might represent the dehydrogenase yielding the aldehyde in position 1 of arnamial and other melleolides. Finally, several halogenase localized outside of the cluster, are able to catalyze the transfer of a single chlorine atom to the melleolide backbone, resulting in a 6'-chloromelleolide product. In Armillaria gallica (Bulbous honey fungus), this protein is Cytochrome P450 monooxygenase ARMGADRAFT_1018420.